A 792-amino-acid polypeptide reads, in one-letter code: Phenylalanine--tRNA ligase beta subunit (792 aa).

Residues 39 to 147 (GESLGQVVVA…DDAPVGQALA (109 aa)) form the tRNA-binding domain. Positions 400 to 475 (PQPARILLRR…RIHGYDRVPT (76 aa)) constitute a B5 domain. Residues aspartate 453, aspartate 459, glutamate 462, and aspartate 463 each contribute to the Mg(2+) site. The FDX-ACB domain maps to 698 to 791 (SRFPSVRRDL…IEREHRARIR (94 aa)).

It belongs to the phenylalanyl-tRNA synthetase beta subunit family. Type 1 subfamily. As to quaternary structure, tetramer of two alpha and two beta subunits. Requires Mg(2+) as cofactor.

Its subcellular location is the cytoplasm. The catalysed reaction is tRNA(Phe) + L-phenylalanine + ATP = L-phenylalanyl-tRNA(Phe) + AMP + diphosphate + H(+). In Xanthomonas oryzae pv. oryzae (strain KACC10331 / KXO85), this protein is Phenylalanine--tRNA ligase beta subunit.